The chain runs to 353 residues: Protein RecA (353 aa).

67-74 (GPESSGKT) lines the ATP pocket. Positions 330–353 (SNPNSTPDFSVDDSEGVAETNEDF) are disordered. A compositionally biased stretch (acidic residues) spans 339–353 (SVDDSEGVAETNEDF).

This sequence belongs to the RecA family.

The protein resides in the cytoplasm. Functionally, can catalyze the hydrolysis of ATP in the presence of single-stranded DNA, the ATP-dependent uptake of single-stranded DNA by duplex DNA, and the ATP-dependent hybridization of homologous single-stranded DNAs. It interacts with LexA causing its activation and leading to its autocatalytic cleavage. In Shigella sonnei, this protein is Protein RecA.